The following is a 323-amino-acid chain: MPQNPSDRRPAPRDNPGTNAYEPLLSAEVRAALSTGLPVVALESTIIAHGLPRPRNLSVARELEGLVRSAGAVPATVAVLDGRARIGLDGDQLERVAGDPAVRKLGHRDLAPALAAGADGATTVSATAFLAARAGIGVFATGGLGGVHREWAENQDESADLRLLARTGITVVCAGVKSILDVPATLQRLETLGVPVVGYGTGHFPGFYLSSSGEPVDWTVHSPEEVAEVIRAREALGGPVGALIVANPVAERDQLDPVLHDRVLAQALDACRERGISGQGVTPFLLDQLTRRTEGASLEANLAAVRGNVTLAARIAVAAADAR.

Glu43 functions as the Proton donor in the catalytic mechanism. Positions 104 and 124 each coordinate substrate. Asp156 contacts Mn(2+). 158-160 (SAD) lines the substrate pocket. The active-site Nucleophile is Lys177.

Belongs to the pseudouridine-5'-phosphate glycosidase family. In terms of assembly, homotrimer. Requires Mn(2+) as cofactor.

It carries out the reaction D-ribose 5-phosphate + uracil = psi-UMP + H2O. Functionally, catalyzes the reversible cleavage of pseudouridine 5'-phosphate (PsiMP) to ribose 5-phosphate and uracil. Functions biologically in the cleavage direction, as part of a pseudouridine degradation pathway. The sequence is that of Pseudouridine-5'-phosphate glycosidase from Streptomyces griseus subsp. griseus (strain JCM 4626 / CBS 651.72 / NBRC 13350 / KCC S-0626 / ISP 5235).